We begin with the raw amino-acid sequence, 112 residues long: MKEFHLHKYPVTSVEGNEYAVSIYNDRHSKGFVKVSLYKKVRGFFRKEKFKCLTREGDFAPSYFEEKWDYDYIQMAINEVINYENSIKEQINHENKQKAAIEKFEAWSGQEV.

This is SPbeta prophage-derived uncharacterized protein YoqB (yoqB) from Bacillus subtilis (strain 168).